The following is a 460-amino-acid chain: MLO-like protein 9 (460 aa).

Over 1 to 21 the chain is Extracellular; sequence MAGGGGGGGGEGPRQLDQTPT. A helical membrane pass occupies residues 22–42; that stretch reads WAVSTVCGVIILISIILELII. The Cytoplasmic portion of the chain corresponds to 43-67; sequence HKVGEVFERKKKKALFEALEKIKNE. A helical membrane pass occupies residues 68-88; that stretch reads LMVLGFISLLLTFGQNYIASI. Residues 89–158 lie on the Extracellular side of the membrane; that stretch reads CVPSRYGHAM…ISLNALHQVH (70 aa). Residues 159 to 179 traverse the membrane as a helical segment; it reads IFIFFLAVFHVIYSAITMMLG. Topologically, residues 180–289 are cytoplasmic; sequence RAKIRGWKVW…KVVVGIRPEL (110 aa). A helical transmembrane segment spans residues 290 to 310; that stretch reads WAFVMLFLLFDVHGWYVTAVI. The Extracellular segment spans residues 311-315; the sequence is TMIPP. A helical transmembrane segment spans residues 316–336; the sequence is LLTLAIGTKLQAIISYMALEI. The Cytoplasmic portion of the chain corresponds to 337 to 366; that stretch reads QERHAVIQGMPVVNVSDQHFWFEKPDLVLH. Residues 367-387 form a helical membrane-spanning segment; sequence MIHFVLFQNAFEITYFFWIWY. At 388-398 the chain is on the extracellular side; the sequence is EFGLRSCFHHH. Residues 399-419 form a helical membrane-spanning segment; sequence FGLIIIRVCLGVGVQFLCSYI. The Cytoplasmic segment spans residues 420-460; sequence TLPLYALVTQMGSTMKRSVFDEQTSKALEQWHKKARKKNEK. The interval 441–460 is calmodulin-binding; the sequence is EQTSKALEQWHKKARKKNEK.

The protein belongs to the MLO family.

It is found in the membrane. May be involved in modulation of pathogen defense and leaf cell death. Activity seems to be regulated by Ca(2+)-dependent calmodulin binding and seems not to require heterotrimeric G proteins. This Arabidopsis thaliana (Mouse-ear cress) protein is MLO-like protein 9 (MLO9).